A 2797-amino-acid polypeptide reads, in one-letter code: Nonribosomal peptide synthetase penN (2797 aa).

An adenylation 1 region spans residues 239–625; sequence SRPDHPAICA…ARKDSQVKIR (387 aa). In terms of domain architecture, Carrier 1 spans 751–824; sequence TDTERHVHRF…DIVSLVRTAT (74 aa). Ser785 is modified (O-(pantetheine 4'-phosphoryl)serine). A disordered region spans residues 830-856; it reads PSAGAEISRSDAPTESPATGSFEGSGY. Residues 870-1299 form a condensation 1 region; it reads QSFSQARMWF…DIEIGSLLLT (430 aa). The adenylation 2 stretch occupies residues 1328–1731; that stretch reads FHQQVAAHGD…GRMDQQVKIR (404 aa). The tract at residues 1857–1953 is methyltransferase; the sequence is LEIGTGTGMI…VIKQLIQLHD (97 aa). Residues 2277-2351 enclose the Carrier 2 domain; the sequence is SFTDDIERAM…RLAGRVRGFR (75 aa). Ser2311 bears the O-(pantetheine 4'-phosphoryl)serine mark. The interval 2516–2658 is condensation 2; that stretch reads YDGISLSSIL…VNRTLIRVQL (143 aa).

Belongs to the NRP synthetase family.

It catalyses the reaction O-methyl-L-tyrosine + anthranilate + S-adenosyl-L-methionine + 2 ATP = (-)-4'-methoxycyclopeptine + 2 AMP + S-adenosyl-L-homocysteine + 2 diphosphate + 2 H(+). It carries out the reaction anthranilate + L-phenylalanine + S-adenosyl-L-methionine + 2 ATP = cyclopeptine + 2 AMP + S-adenosyl-L-homocysteine + 2 diphosphate + 2 H(+). It participates in secondary metabolite biosynthesis. The protein operates within alkaloid biosynthesis. It functions in the pathway mycotoxin biosynthesis. Nonribosomal peptide synthetase; part of the gene cluster that mediates the biosynthesis of penigequinolones, potent insecticidal alkaloids that contain a highly modified 10-carbon prenyl group. The first stage is catalyzed by the nonribosomal peptide synthetase penN that condenses anthranilic acid and O-methyl-L-tyrosine to produce 4'-methoxycyclopeptin. 4'-methoxycyclopeptin is then converted to 4'-methoxydehydrocyclopeptin by the ketoglutarate-dependent dioxygenase penM through dehydrogenation to form a double bond between C-alpha and C-beta of the O-methyltyrosine side chain. PenM also converts its first product methoxydehydrocyclopeptin to 4'-methoxycyclopenin. The following conversion of 4'methoxycyclopenin into 4'-methoxyviridicatin is catalyzed by the cyclopenase penL. 4'-methoxyviridicatin is the precursor of quinolone natural products, and is further converted to quinolinone B. The prenyltransferase penI then catalyzes the canonical Friedel-Crafts alkylation of quinolinone B with dimethylallyl cation to yield dimethylallyl quinolone, which is subjected to FAD-dependent dehydrogenation by the FAD-linked oxidoreductase penH to yield conjugated aryl diene. The delta(3') double bond then serves as the site of the second alkylation with DMAPP catalyzed by the prenyltransferase penG to yield a carbenium ion intermediate, which can be attacked by H(2)O to yield a styrenyl quinolone containing a C3'-hydroxyprenyl chain, or undergo cyclization to yield yaequinolones J1 and J2. The conversion of the styrenyl quinolone into the tetrahydrofuran-containing yaequinolone C is performed by the FAD-dependent monooxygenase penE and involves epoxidation of the terminal C7'-C8' olefin, followed by epoxide ring opening initiated by the C3' hydroxyl group. The predicted cysteine hydrolase penJ acts as an epoxide hydrolase that enhances the rate of the 5-exo-tet cyclization step, increasing the yield of yaequinolone C. PenF catalyzes the cationic rearrangement of the epoxide formed by penE (before ring opening to produce yaequinolone C) into yaequinolone D. Finally, the short-chain dehydrogenase/reductase (SDR)-like reductase penD, catalyzes both the dehydration of yaequinolone D and the reduction of the resulting oxonium to yield penigequinolone. The polypeptide is Nonribosomal peptide synthetase penN (Penicillium thymicola).